Consider the following 146-residue polypeptide: Hemoglobin subunit beta (146 aa).

An N-acetylvaline modification is found at Val1. A Globin domain is found at 2–146 (HLSAEEKAAV…VANALAHKYH (145 aa)). Phosphothreonine is present on Thr12. Residue Ser44 is modified to Phosphoserine. Lys59 carries the post-translational modification N6-acetyllysine. Residue His63 coordinates heme b. Lys82 carries the N6-acetyllysine modification. Residue His92 coordinates heme b. Cys93 carries the post-translational modification S-nitrosocysteine. Lys144 bears the N6-acetyllysine mark.

Belongs to the globin family. Heterotetramer of two alpha chains and two beta chains. As to expression, red blood cells.

Its function is as follows. Involved in oxygen transport from the lung to the various peripheral tissues. This chain is Hemoglobin subunit beta (HBB), found in Ctenodactylus gundi (Northern gundi).